The primary structure comprises 90 residues: UPF0223 protein lwe1035 (90 aa).

It belongs to the UPF0223 family.

This chain is UPF0223 protein lwe1035, found in Listeria welshimeri serovar 6b (strain ATCC 35897 / DSM 20650 / CCUG 15529 / CIP 8149 / NCTC 11857 / SLCC 5334 / V8).